A 256-amino-acid polypeptide reads, in one-letter code: Major prion protein (256 aa).

The N-terminal stretch at M1–C24 is a signal peptide. Positions K25–A233 are interaction with GRB2, ERI3 and SYN1. The segment at P28–T110 is disordered. A run of 5 repeats spans residues P54–Q62, P63–Q70, P71–Q78, P79–Q86, and P87–Q95. Residues P54–Q95 are 5 X 8 AA tandem repeats of P-H-G-G-G-W-G-Q. Over residues Q55–G97 the composition is skewed to gly residues. The Cu(2+) site is built by H64, G65, G66, H72, G73, G74, H80, G81, G82, H88, G90, and G91. A disulfide bridge connects residues C182 and C217. N-linked (GlcNAc...) asparagine glycosylation is found at N184 and N200. The GPI-anchor amidated alanine moiety is linked to residue A233. Positions S234–G256 are cleaved as a propeptide — removed in mature form.

It belongs to the prion family. As to quaternary structure, monomer and homodimer. Has a tendency to aggregate into amyloid fibrils containing a cross-beta spine, formed by a steric zipper of superposed beta-strands. Soluble oligomers may represent an intermediate stage on the path to fibril formation. Copper binding may promote oligomerization. Interacts with GRB2, APP, ERI3/PRNPIP and SYN1. Mislocalized cytosolically exposed PrP interacts with MGRN1; this interaction alters MGRN1 subcellular location and causes lysosomal enlargement. Interacts with KIAA1191.

The protein localises to the cell membrane. It is found in the golgi apparatus. Its function is as follows. Its primary physiological function is unclear. Has cytoprotective activity against internal or environmental stresses. May play a role in neuronal development and synaptic plasticity. May be required for neuronal myelin sheath maintenance. May play a role in iron uptake and iron homeostasis. Soluble oligomers are toxic to cultured neuroblastoma cells and induce apoptosis (in vitro). Association with GPC1 (via its heparan sulfate chains) targets PRNP to lipid rafts. Also provides Cu(2+) or Zn(2+) for the ascorbate-mediated GPC1 deaminase degradation of its heparan sulfate side chains. This chain is Major prion protein (PRNP), found in Budorcas taxicolor (Golden takin).